Here is a 158-residue protein sequence, read N- to C-terminus: NAD(P)H-quinone oxidoreductase subunit N (158 aa).

The protein belongs to the complex I NdhN subunit family. NDH-1 can be composed of about 15 different subunits; different subcomplexes with different compositions have been identified which probably have different functions.

It is found in the cellular thylakoid membrane. It catalyses the reaction a plastoquinone + NADH + (n+1) H(+)(in) = a plastoquinol + NAD(+) + n H(+)(out). The enzyme catalyses a plastoquinone + NADPH + (n+1) H(+)(in) = a plastoquinol + NADP(+) + n H(+)(out). Functionally, NDH-1 shuttles electrons from an unknown electron donor, via FMN and iron-sulfur (Fe-S) centers, to quinones in the respiratory and/or the photosynthetic chain. The immediate electron acceptor for the enzyme in this species is believed to be plastoquinone. Couples the redox reaction to proton translocation, and thus conserves the redox energy in a proton gradient. Cyanobacterial NDH-1 also plays a role in inorganic carbon-concentration. In Prochlorococcus marinus (strain MIT 9215), this protein is NAD(P)H-quinone oxidoreductase subunit N.